The primary structure comprises 521 residues: Anaerobic nitric oxide reductase flavorubredoxin (521 aa).

A zinc metallo-hydrolase region spans residues 30–210; that stretch reads HKGTSYNSYL…PFSPLVTAKI (181 aa). The Fe cation site is built by His-79, Glu-81, Asp-83, His-147, Asp-166, and His-227. In terms of domain architecture, Flavodoxin-like spans 254–393; it reads ITLFYDSMSN…LCREHGRQLA (140 aa). FMN contacts are provided by residues 260–264 and 342–369; these read SMSNN and AFGS…DISI. The region spanning 464–515 is the Rubredoxin-like domain; it reads DQPMLCTVCQWIYDPALGEPDQLVAPGTPWARVPDSFLCPGCGIGKEVFEPC. Fe cation contacts are provided by Cys-469, Cys-472, Cys-502, and Cys-505.

The protein in the N-terminal section; belongs to the zinc metallo-hydrolase group 3 family. As to quaternary structure, homotetramer. Requires Fe cation as cofactor. FMN is required as a cofactor.

The protein localises to the cytoplasm. It functions in the pathway nitrogen metabolism; nitric oxide reduction. Anaerobic nitric oxide reductase; uses NADH to detoxify nitric oxide (NO), protecting several 4Fe-4S NO-sensitive enzymes. Has at least 2 reductase partners, only one of which (NorW, flavorubredoxin reductase) has been identified. NO probably binds to the di-iron center; electrons enter from the NorW at rubredoxin and are transferred sequentially to the FMN center and the di-iron center. Also able to function as an aerobic oxygen reductase. The sequence is that of Anaerobic nitric oxide reductase flavorubredoxin from Aeromonas salmonicida (strain A449).